The following is a 261-amino-acid chain: Maspardin (261 aa).

The AB hydrolase-1 domain occupies 87–159; that stretch reads FCDGFRKLLD…NSFWLMPAFM (73 aa). Serine 257 carries the phosphoserine modification.

This sequence belongs to the AB hydrolase superfamily. In terms of assembly, interacts with CD4. Interacts with ALDH16A1.

It localises to the cytoplasm. May play a role as a negative regulatory factor in CD4-dependent T-cell activation. The chain is Maspardin (Spg21) from Rattus norvegicus (Rat).